The chain runs to 103 residues: MYAVIKTGGKQYKVQEGDTLRVEKLEGTENGEIEFNDVLMFSDGENVTLGQPAIEDAIVKGHILEQGKGKKVLIFKFKRRKGYRNLRGHRQQYTAVKIDSILV.

It belongs to the bacterial ribosomal protein bL21 family. As to quaternary structure, part of the 50S ribosomal subunit. Contacts protein L20.

In terms of biological role, this protein binds to 23S rRNA in the presence of protein L20. The chain is Large ribosomal subunit protein bL21 from Desulforapulum autotrophicum (strain ATCC 43914 / DSM 3382 / VKM B-1955 / HRM2) (Desulfobacterium autotrophicum).